The sequence spans 300 residues: Acetaldehyde dehydrogenase (300 aa).

11-14 (SGNI) serves as a coordination point for NAD(+). The Acyl-thioester intermediate role is filled by Cys129. NAD(+) contacts are provided by residues 160–168 (SVGPGTRQN) and Asn271.

This sequence belongs to the acetaldehyde dehydrogenase family.

The catalysed reaction is acetaldehyde + NAD(+) + CoA = acetyl-CoA + NADH + H(+). The sequence is that of Acetaldehyde dehydrogenase (mhpF) from Pseudoalteromonas translucida (strain TAC 125).